The following is a 113-amino-acid chain: CRISPR-associated endoribonuclease Cas2 2 (113 aa).

Aspartate 32 is a binding site for Mg(2+).

It belongs to the CRISPR-associated endoribonuclease Cas2 protein family. As to quaternary structure, homodimer, forms a heterotetramer with a Cas1 homodimer. It depends on Mg(2+) as a cofactor.

Its function is as follows. CRISPR (clustered regularly interspaced short palindromic repeat), is an adaptive immune system that provides protection against mobile genetic elements (viruses, transposable elements and conjugative plasmids). CRISPR clusters contain sequences complementary to antecedent mobile elements and target invading nucleic acids. CRISPR clusters are transcribed and processed into CRISPR RNA (crRNA). Functions as a ssRNA-specific endoribonuclease. Involved in the integration of spacer DNA into the CRISPR cassette. This Nitrosomonas europaea (strain ATCC 19718 / CIP 103999 / KCTC 2705 / NBRC 14298) protein is CRISPR-associated endoribonuclease Cas2 2 (cas22).